Here is a 1079-residue protein sequence, read N- to C-terminus: Eukaryotic translation initiation factor 5B (1079 aa).

The disordered stretch occupies residues 1-478 (MGKKGKKSGY…QAAPAESNVS (478 aa)). Over residues 22–38 (SGQNEYLDNTSQDSPQN) the composition is skewed to polar residues. The segment covering 57-67 (SKKKKGKKNKG) has biased composition (basic residues). A phosphoserine mark is found at S73, S77, and S82. The segment covering 105–114 (KKGKKGKKSK) has biased composition (basic residues). S127 is modified (phosphoserine). The segment covering 160–169 (NNNESEAAAP) has biased composition (low complexity). A compositionally biased stretch (basic and acidic residues) spans 173–192 (PEVRVKTKKEKEREKKEREK). Residues 193–204 (LRKKQQQAKKKG) are compositionally biased toward basic residues. Residues 207-233 (GEDTLASSEVSSEVDISTPAENDSSAK) show a composition bias toward polar residues. Over residues 253 to 293 (MLEEKRAREEEEQRIREEEARIAEEEKRLAEVEEARKEEAR) the composition is skewed to basic and acidic residues. Low complexity-rich tracts occupy residues 321–334 (QQALAQRRLQQMLE) and 361–376 (RSGTSSISSSGILESS). T364 carries the post-translational modification Phosphothreonine. Residues 385 to 408 (EPQKDSKDDSEKVEKETEVERKEE) show a composition bias toward basic and acidic residues. Residues 409 to 431 (NEAEAEAVFDDWEAALEEPEVAE) show a composition bias toward acidic residues. The span at 436–466 (VTEKKETDIKSDAVEHSIKDKEDSKTDKVDD) shows a compositional bias: basic and acidic residues. One can recognise a tr-type G domain in the interval 482 to 700 (LRSPICCILG…LISLTQTRMS (219 aa)). Positions 491-498 (GHVDTGKT) are G1. Residue 491–498 (GHVDTGKT) coordinates GTP. The G2 stretch occupies residues 516 to 520 (GITQQ). A G3 region spans residues 555–558 (DTPG). Residues 609–612 (NKVD) are G4. The G5 stretch occupies residues 677-679 (SAQ).

The protein belongs to the TRAFAC class translation factor GTPase superfamily. Classic translation factor GTPase family. IF-2 subfamily. A monovalent cation serves as cofactor.

It localises to the cytoplasm. The catalysed reaction is GTP + H2O = GDP + phosphate + H(+). Functionally, plays a role in translation initiation. Translational GTPase that catalyzes the joining of the 40S and 60S subunits to form the 80S initiation complex with the initiator methionine-tRNA in the P-site base paired to the start codon. GTP binding and hydrolysis induces conformational changes in the enzyme that renders it active for productive interactions with the ribosome. The release of the enzyme after formation of the initiation complex is a prerequisite to form elongation-competent ribosomes. This is Eukaryotic translation initiation factor 5B from Schizosaccharomyces pombe (strain 972 / ATCC 24843) (Fission yeast).